A 603-amino-acid polypeptide reads, in one-letter code: Cdc42-interacting protein 4 (603 aa).

Residues 1–117 form a required for podosome formation and interaction with AKAP9 and microtubules region; it reads MDWGTELWDQ…EMKQERKMHF (117 aa). A required for translocation to the plasma membrane in response to insulin region spans residues 1–117; it reads MDWGTELWDQ…EMKQERKMHF (117 aa). The 264-residue stretch at 1 to 264 folds into the F-BAR domain; it reads MDWGTELWDQ…AAESVDAKND (264 aa). Residues 67–259 adopt a coiled-coil conformation; the sequence is FSQQQSFVQL…EGMKVAAESV (193 aa). Residues 293-539 form an interaction with CDC42 region; the sequence is RVPSDSSLGT…YTEFDEDFEE (247 aa). Positions 293 to 603 are interaction with PDE6G; that stretch reads RVPSDSSLGT…PTSYLRVTLN (311 aa). The disordered stretch occupies residues 295–358; it reads PSDSSLGTPD…PSSPRSGRDP (64 aa). S296, S298, and S299 each carry phosphoserine. Basic residues predominate over residues 316-329; that stretch reads SRAKRWPFGKKNKP. Over residues 333-346 the composition is skewed to low complexity; that stretch reads SLSLLGGHLPSTLS. 2 positions are modified to phosphoserine: S335 and S351. Positions 388–481 form a coiled coil; the sequence is TEDFSHLPPE…ESRVLSNRGD (94 aa). The region spanning 393–470 is the REM-1 domain; that stretch reads HLPPEQQRKR…VQKYEAWLAE (78 aa). The required for interaction with FASLG and localization to lysosomes stretch occupies residues 471-603; the sequence is AESRVLSNRG…PTSYLRVTLN (133 aa). Residues 477–541 form a disordered region; the sequence is SNRGDSLSRH…EFDEDFEEPA (65 aa). S482 is modified (phosphoserine). Positions 487-543 are interaction with DNM2 and WASL; that stretch reads ARPPDPPTTAPPDSSSSSTNSGSQDNKESSSEEPPSEGQDTPIYTEFDEDFEEPASP. Positions 497–510 are enriched in low complexity; it reads PPDSSSSSTNSGSQ. Positions 532 to 603 are interaction with DNM1 and WASL; that stretch reads EFDEDFEEPA…PTSYLRVTLN (72 aa). The required for podosome formation stretch occupies residues 540–603; the sequence is PASPIGQCVA…PTSYLRVTLN (64 aa). Residues 542–603 enclose the SH3 domain; the sequence is SPIGQCVAIY…PTSYLRVTLN (62 aa). The interval 546–603 is interaction with WAS; the sequence is QCVAIYHFEGSSEGTVSMSEGEDLSLMEEDKGDGWTRVRRKQGAEGYVPTSYLRVTLN. The interval 548 to 603 is interaction with ARHGAP17, DAAM1, DIAPH1 and DIAPH2; that stretch reads VAIYHFEGSSEGTVSMSEGEDLSLMEEDKGDGWTRVRRKQGAEGYVPTSYLRVTLN.

It belongs to the FNBP1 family. As to quaternary structure, homodimerizes, the dimers can polymerize end-to-end to form filamentous structures. Interacts with AKAP9, ARHGAP17, DAAM1, DIAPH1, DIAPH2, DNM1, FASLG/FASL, GAPVD1, LYN, microtubules, PDE6G, SRC and WAS/WASP. Interacts with the ligand binding domain of the thyroid receptor (TR) in the presence of thyroid hormone. May interact with CTNNB1 and HD/HTT. Interacts specifically with GTP-bound CDC42 and RHOQ. Interacts with DNM2 and WASL. Post-translationally, tyrosine phosphorylated. Also phosphorylated by PKA.

The protein resides in the cytoplasm. The protein localises to the cytoskeleton. Its subcellular location is the cell cortex. It localises to the lysosome. It is found in the golgi apparatus. The protein resides in the cell membrane. The protein localises to the cell projection. Its subcellular location is the phagocytic cup. Functionally, required to coordinate membrane tubulation with reorganization of the actin cytoskeleton during endocytosis. Binds to lipids such as phosphatidylinositol 4,5-bisphosphate and phosphatidylserine and promotes membrane invagination and the formation of tubules. Also promotes CDC42-induced actin polymerization by recruiting WASL/N-WASP which in turn activates the Arp2/3 complex. Actin polymerization may promote the fission of membrane tubules to form endocytic vesicles. Required for the formation of podosomes, actin-rich adhesion structures specific to monocyte-derived cells. May be required for the lysosomal retention of FASLG/FASL. Required for translocation of GLUT4 to the plasma membrane in response to insulin signaling. This Mus musculus (Mouse) protein is Cdc42-interacting protein 4 (Trip10).